The sequence spans 327 residues: Serpentine receptor class gamma-2 (327 aa).

The next 6 membrane-spanning stretches (helical) occupy residues 35–55, 70–90, 157–177, 181–203, 244–264, and 277–297; these read LVQF…LYIL, ILFI…IFFA, MKYA…NIII, LPVY…ATMT, IASF…SLFA, and FLLP…MVMA.

It belongs to the nematode receptor-like protein srg family.

It is found in the membrane. The protein is Serpentine receptor class gamma-2 (srg-2) of Caenorhabditis elegans.